Here is a 107-residue protein sequence, read N- to C-terminus: Pro-corazonin (107 aa).

Residues 1–21 (MVNSQILILFILSLTITIVMC) form the signal peptide. Residue Gln22 is modified to Pyrrolidone carboxylic acid. Asn32 carries the post-translational modification Asparagine amide. Positions 88 to 107 (SFSENMINDHRQPAPTNNNY) are excised as a propeptide.

Belongs to the corazonin family. As to expression, in the adult brain, expressed in four neurons of the lateral protocerebrum project axons towards the retrocerebral complex.

The protein resides in the secreted. Functionally, cardioactive peptide. Corazonin is probably involved in the physiological regulation of the heart beat. The chain is Pro-corazonin from Apis mellifera (Honeybee).